We begin with the raw amino-acid sequence, 90 residues long: Small ribosomal subunit protein uS15c (90 aa).

It belongs to the universal ribosomal protein uS15 family. As to quaternary structure, part of the 30S ribosomal subunit.

The protein localises to the plastid. Its subcellular location is the chloroplast. The protein is Small ribosomal subunit protein uS15c (rps15) of Dioscorea elephantipes (Elephant's foot yam).